The sequence spans 130 residues: Small ribosomal subunit protein uS9 (130 aa).

The protein belongs to the universal ribosomal protein uS9 family.

This is Small ribosomal subunit protein uS9 from Anoxybacillus flavithermus (strain DSM 21510 / WK1).